We begin with the raw amino-acid sequence, 324 residues long: UDP-galactose transporter homolog 1 (324 aa).

A run of 2 helical transmembrane segments spans residues 7–27 (LVIAVCGIYATFLTWSLAQEP) and 42–62 (HSSFIVLCQALTAAVVGLCYL). Residue Asn97 is glycosylated (N-linked (GlcNAc...) asparagine). Transmembrane regions (helical) follow at residues 106 to 126 (VGYMLAKSCKLLPIMLVHVLV), 135 to 155 (KALVGVLVSGGVALFTLGGAE), 161 to 181 (ASLYGLGMLLVSLFLDGLTNA), 199 to 219 (HLMVALNTAIVLWNLAYLVLF), 237 to 257 (ILTYLFTYCACGALGQCFVFF), 265 to 285 (LVLATVTVTRKMVSMLLSIVV), and 290 to 310 (VRPVQWLGILVVFGGIIWETV).

The protein belongs to the nucleotide-sugar transporter family. SLC35B subfamily.

It localises to the endoplasmic reticulum membrane. Functionally, may be involved in specific transport of UDP-Gal from the cytosol to the Golgi lumen. Involved in the maintenance of optimal conditions for the folding of secretory pathway proteins in the endoplasmic reticulum. This is UDP-galactose transporter homolog 1 (HUT1) from Eremothecium gossypii (strain ATCC 10895 / CBS 109.51 / FGSC 9923 / NRRL Y-1056) (Yeast).